The chain runs to 459 residues: Cysteine--tRNA ligase (459 aa).

C28 is a binding site for Zn(2+). Residues 30 to 40 (VTIYDLCHIGH) carry the 'HIGH' region motif. Zn(2+) contacts are provided by C209, H234, and E238. The short motif at 266-270 (KMSKS) is the 'KMSKS' region element. K269 is a binding site for ATP.

This sequence belongs to the class-I aminoacyl-tRNA synthetase family. In terms of assembly, monomer. Zn(2+) is required as a cofactor.

It is found in the cytoplasm. It carries out the reaction tRNA(Cys) + L-cysteine + ATP = L-cysteinyl-tRNA(Cys) + AMP + diphosphate. This is Cysteine--tRNA ligase from Shewanella loihica (strain ATCC BAA-1088 / PV-4).